The following is a 307-amino-acid chain: Elongation factor Ts (307 aa).

Positions 82–85 (TDFV) are involved in Mg(2+) ion dislocation from EF-Tu.

Belongs to the EF-Ts family.

The protein localises to the cytoplasm. In terms of biological role, associates with the EF-Tu.GDP complex and induces the exchange of GDP to GTP. It remains bound to the aminoacyl-tRNA.EF-Tu.GTP complex up to the GTP hydrolysis stage on the ribosome. This chain is Elongation factor Ts, found in Nautilia profundicola (strain ATCC BAA-1463 / DSM 18972 / AmH).